The chain runs to 248 residues: 4-hydroxy-tetrahydrodipicolinate reductase (248 aa).

NAD(+) contacts are provided by residues 74–76 and 99–102; these read GTT and SANF. The active-site Proton donor/acceptor is histidine 134. Residue histidine 135 participates in (S)-2,3,4,5-tetrahydrodipicolinate binding. The active-site Proton donor is the lysine 138. A (S)-2,3,4,5-tetrahydrodipicolinate-binding site is contributed by 144–145; it reads GT.

Belongs to the DapB family.

Its subcellular location is the cytoplasm. The enzyme catalyses (S)-2,3,4,5-tetrahydrodipicolinate + NAD(+) + H2O = (2S,4S)-4-hydroxy-2,3,4,5-tetrahydrodipicolinate + NADH + H(+). The catalysed reaction is (S)-2,3,4,5-tetrahydrodipicolinate + NADP(+) + H2O = (2S,4S)-4-hydroxy-2,3,4,5-tetrahydrodipicolinate + NADPH + H(+). It functions in the pathway amino-acid biosynthesis; L-lysine biosynthesis via DAP pathway; (S)-tetrahydrodipicolinate from L-aspartate: step 4/4. Its function is as follows. Catalyzes the conversion of 4-hydroxy-tetrahydrodipicolinate (HTPA) to tetrahydrodipicolinate. This Chlorobium phaeobacteroides (strain DSM 266 / SMG 266 / 2430) protein is 4-hydroxy-tetrahydrodipicolinate reductase.